We begin with the raw amino-acid sequence, 467 residues long: Chromosomal replication initiator protein DnaA (467 aa).

The interval 1–84 (MDISLDQLWD…LQVEFSVSPH (84 aa)) is domain I, interacts with DnaA modulators. Positions 84–125 (HASVEAEPPSRAISPTSGRAGSLPASTTLGLEVGGSLPMRAP) are domain II. Residues 89 to 108 (AEPPSRAISPTSGRAGSLPA) are disordered. Residues 96–108 (ISPTSGRAGSLPA) show a composition bias toward polar residues. Residues 126–342 (DLNPKYSFSR…GALIRAVAYV (217 aa)) are domain III, AAA+ region. Residues glycine 170, glycine 172, lysine 173, and threonine 174 each coordinate ATP. Residues 343 to 467 (SISGLPMSVE…LRVVANSRSS (125 aa)) form a domain IV, binds dsDNA region.

This sequence belongs to the DnaA family. In terms of assembly, oligomerizes as a right-handed, spiral filament on DNA at oriC.

It localises to the cytoplasm. Its function is as follows. Plays an essential role in the initiation and regulation of chromosomal replication. ATP-DnaA binds to the origin of replication (oriC) to initiate formation of the DNA replication initiation complex once per cell cycle. Binds the DnaA box (a 9 base pair repeat at the origin) and separates the double-stranded (ds)DNA. Forms a right-handed helical filament on oriC DNA; dsDNA binds to the exterior of the filament while single-stranded (ss)DNA is stabiized in the filament's interior. The ATP-DnaA-oriC complex binds and stabilizes one strand of the AT-rich DNA unwinding element (DUE), permitting loading of DNA polymerase. After initiation quickly degrades to an ADP-DnaA complex that is not apt for DNA replication. Binds acidic phospholipids. This Synechococcus sp. (strain JA-2-3B'a(2-13)) (Cyanobacteria bacterium Yellowstone B-Prime) protein is Chromosomal replication initiator protein DnaA.